Reading from the N-terminus, the 594-residue chain is Choline dehydrogenase, mitochondrial (594 aa).

Residues 1–29 constitute a mitochondrion transit peptide; it reads MWCLLRGLGRPGALARGALGQQQSLGARA. 42–71 serves as a coordination point for FAD; it reads SYVVVGAGSAGCVLAGRLTEDPAERVLLLE. Lysine 436 is modified (N6-succinyllysine). Residues lysine 484 and lysine 496 each carry the N6-acetyllysine; alternate modification. 2 positions are modified to N6-succinyllysine; alternate: lysine 484 and lysine 496. Histidine 511 functions as the Proton acceptor in the catalytic mechanism. N6-acetyllysine is present on lysine 580.

This sequence belongs to the GMC oxidoreductase family. The cofactor is FAD.

It is found in the mitochondrion inner membrane. The catalysed reaction is choline + A = betaine aldehyde + AH2. Its pathway is amine and polyamine biosynthesis; betaine biosynthesis via choline pathway; betaine aldehyde from choline (cytochrome c reductase route): step 1/1. The protein is Choline dehydrogenase, mitochondrial (CHDH) of Homo sapiens (Human).